The following is a 1588-amino-acid chain: Autotransporter adhesin EhaG (1588 aa).

The signal sequence occupies residues 1 to 53; sequence MNKIFKVIWNPATGNYTVTSETAKSRGKKSGRSKLLISALVAGGMLSSFGALA. The surface exposed passenger domain stretch occupies residues 54-1499; the sequence is NAGNDNGQGV…QETKQYTDQR (1446 aa). A translocator domain region spans residues 1500–1588; sequence MVEMDNKLSK…SAALGAGIQW (89 aa). The next 4 beta stranded transmembrane spans lie at 1534-1544, 1548-1558, 1567-1573, and 1577-1588; these read GASMASIGGGT, ESAVALGVSMV, KLQGSTN, and EYSAALGAGIQW.

This sequence belongs to the autotransporter-2 (AT-2) (TC 1.B.40) family. Homotrimer.

Its subcellular location is the cell surface. The protein resides in the cell outer membrane. In terms of biological role, mediates aggregation, biofilm formation and adhesion to a range of extracellular matrix (ECM) proteins, such as fibronectin, fibrinogen, laminin and collagen types I, II, III, and V. Mediates adhesion to intestinal epithelial cells. The protein is Autotransporter adhesin EhaG of Escherichia coli O157:H7.